We begin with the raw amino-acid sequence, 266 residues long: Undecaprenyl-diphosphatase (266 aa).

Transmembrane regions (helical) follow at residues 1–21 (METF…FLPI), 39–59 (QGLS…VIYF), 87–107 (WWII…KDFI), 111–131 (FRNT…LWAA), 144–164 (MGWK…IPGT), 183–203 (AAAR…ALLV), 218–238 (ALGL…HFFL), and 244–264 (IGMT…LGLL).

Belongs to the UppP family.

Its subcellular location is the cell inner membrane. It carries out the reaction di-trans,octa-cis-undecaprenyl diphosphate + H2O = di-trans,octa-cis-undecaprenyl phosphate + phosphate + H(+). Catalyzes the dephosphorylation of undecaprenyl diphosphate (UPP). Confers resistance to bacitracin. This Shewanella frigidimarina (strain NCIMB 400) protein is Undecaprenyl-diphosphatase.